The following is a 510-amino-acid chain: Scarecrow-like protein 29 (510 aa).

The tract at residues 90-142 (LDLPPEIQQPNDQSRKRSHDGFLEAQQVKKSARSKRKAIKSSEKSSKDGNKEG) is disordered. Residues 102–111 (QSRKRSHDGF) show a composition bias toward basic and acidic residues. The segment covering 119–128 (KSARSKRKAI) has biased composition (basic residues). Residues 129–142 (KSSEKSSKDGNKEG) are compositionally biased toward basic and acidic residues. Positions 136 to 510 (KDGNKEGRWA…EAVSFCSLWK (375 aa)) constitute a GRAS domain. Residues 143 to 205 (RWAEKLLNPC…HLSSSSVSSS (63 aa)) form a leucine repeat I (LRI) region. Positions 224-294 (LLKFYEVSPW…GPPPRVRITV (71 aa)) are VHIID. The VHIID motif lies at 259–263 (LHIID). The leucine repeat II (LRII) stretch occupies residues 312–337 (NYGSQLLGFARSLKINLQISVLDKLQ). Residues 347–435 (LIVCAQFRLH…RKLMEGEATK (89 aa)) form a PFYRE region. Positions 438-510 (MNAGDMNEGK…EAVSFCSLWK (73 aa)) are SAW.

Belongs to the GRAS family. In terms of tissue distribution, expressed in seedlings, roots and flowers.

The protein resides in the nucleus. In terms of biological role, probable transcription factor involved in plant development. In Arabidopsis thaliana (Mouse-ear cress), this protein is Scarecrow-like protein 29 (SCL29).